A 120-amino-acid polypeptide reads, in one-letter code: Large ribosomal subunit protein uL22 (120 aa).

The protein belongs to the universal ribosomal protein uL22 family. Part of the 50S ribosomal subunit.

This protein binds specifically to 23S rRNA; its binding is stimulated by other ribosomal proteins, e.g. L4, L17, and L20. It is important during the early stages of 50S assembly. It makes multiple contacts with different domains of the 23S rRNA in the assembled 50S subunit and ribosome. Functionally, the globular domain of the protein is located near the polypeptide exit tunnel on the outside of the subunit, while an extended beta-hairpin is found that lines the wall of the exit tunnel in the center of the 70S ribosome. In Corynebacterium urealyticum (strain ATCC 43042 / DSM 7109), this protein is Large ribosomal subunit protein uL22.